The primary structure comprises 429 residues: MATEQRPFQLVVFGASGFTGQFVTEEVAREQMASEQSSRLPWAVAGRSKEKLQQVLEKAAQKLGRATLSSEVGIIICDISNPASLDEMAKKATLVLNCVGPYRFYGEPVVKACIENGTSCIDICGEPQFLELMHVKYHEKAAEKGVYIIGSSGFDSIPADLGVLYTRNQMNGTLTAVESFLTINSGPEGLCIHDGTWKSAIYGFGDKGSLRKLRSVSNLKPVPVIGSKLKRRWPVSYCRELNSYAIPFLGSDMSVVKRTQRYLHENLEDSPVQYAAYITVGGITSVIKLMFAGLFFLFFVKFSIGRQLLVKFPWLFSFGYFSKRGPTQKQMDESSFTMTFFGQGYSHGVSAEKNKPNIRICTQVKGPEAGYVATPIAMVQAAVTFLNDASDLPKGGGVFTPGAAFSRTKLIDRLNQHGIQFSVISSSEV.

Residue Ala2 is modified to N-acetylalanine. Residues Ser209, Ser215, and Ser217 each carry the phosphoserine modification.

The protein belongs to the saccharopine dehydrogenase family.

The protein is Saccharopine dehydrogenase-like oxidoreductase (Sccpdh) of Rattus norvegicus (Rat).